We begin with the raw amino-acid sequence, 256 residues long: Phosphonates import ATP-binding protein PhnC (256 aa).

One can recognise an ABC transporter domain in the interval Leu-5–Ser-253. Position 38 to 45 (Gly-38 to Ser-45) interacts with ATP.

This sequence belongs to the ABC transporter superfamily. Phosphonates importer (TC 3.A.1.9.1) family. As to quaternary structure, the complex is composed of two ATP-binding proteins (PhnC), two transmembrane proteins (PhnE) and a solute-binding protein (PhnD).

It is found in the cell inner membrane. The catalysed reaction is phosphonate(out) + ATP + H2O = phosphonate(in) + ADP + phosphate + H(+). Part of the ABC transporter complex PhnCDE involved in phosphonates import. Responsible for energy coupling to the transport system. The sequence is that of Phosphonates import ATP-binding protein PhnC from Bordetella parapertussis (strain 12822 / ATCC BAA-587 / NCTC 13253).